The chain runs to 441 residues: MGCCKVPALIQAQVEMGLVNDVEHKSLFRRDTDSPERKAASLMEQGSLSASFRECSTKTPNNSVLQSFKIVILSNKLNLLLPFGPLAILLHYLTDNKGWIFLLSLVGITPLAERLGYATEQLACYTGSTVGGLLNATFGNVTELIISIFALKSGMIRVVQLTLLGSILSNMLLVLGCAFFCGGLVFSQKEQVFDKGNAVVNSGLLLMAVMGLLFPAVLHYTHSEVHAGSSELALSRFSSCIMLVAYAAYLFFQLKSQPSSYTPLTEETNQNEETSDDDEDPEISKWEAIIWLSILTAWVSLLSGYLVDAIEGASVSWKIPISFISVILLPIVGNAAEHAGAIMFAMKDKLDLSLGVAIGSSIQISMFAVPFCVVIGWMMGAQMDLNFQLFETATLFITVIVVAFFLQEGTSNYFKGLMLILCYLIVAASFFVHEDPHQDDI.

Gly-2 carries the N-myristoyl glycine lipid modification. The Cytoplasmic portion of the chain corresponds to 2 to 69 (GCCKVPALIQ…PNNSVLQSFK (68 aa)). Residues Cys-3 and Cys-4 are each lipidated (S-palmitoyl cysteine). Residues 70 to 90 (IVILSNKLNLLLPFGPLAILL) traverse the membrane as a helical segment. Over 91-97 (HYLTDNK) the chain is Extracellular. Residues 98–118 (GWIFLLSLVGITPLAERLGYA) form a helical membrane-spanning segment. Topologically, residues 119-129 (TEQLACYTGST) are cytoplasmic. A helical transmembrane segment spans residues 130-150 (VGGLLNATFGNVTELIISIFA). Residues 139–174 (GNVTELIISIFALKSGMIRVVQLTLLGSILSNMLLV) are cation selection. Over 151 to 165 (LKSGMIRVVQLTLLG) the chain is Extracellular. Residues 166–186 (SILSNMLLVLGCAFFCGGLVF) form a helical membrane-spanning segment. The Cytoplasmic segment spans residues 187–197 (SQKEQVFDKGN). Residues 198–218 (AVVNSGLLLMAVMGLLFPAVL) form a helical membrane-spanning segment. Topologically, residues 219-231 (HYTHSEVHAGSSE) are extracellular. Residues 232 to 252 (LALSRFSSCIMLVAYAAYLFF) traverse the membrane as a helical segment. At 253–286 (QLKSQPSSYTPLTEETNQNEETSDDDEDPEISKW) the chain is on the cytoplasmic side. The helical transmembrane segment at 287–307 (EAIIWLSILTAWVSLLSGYLV) threads the bilayer. At 308 to 311 (DAIE) the chain is on the extracellular side. Residues 312 to 332 (GASVSWKIPISFISVILLPIV) traverse the membrane as a helical segment. The Cytoplasmic portion of the chain corresponds to 333 to 354 (GNAAEHAGAIMFAMKDKLDLSL). Residues 333–368 (GNAAEHAGAIMFAMKDKLDLSLGVAIGSSIQISMFA) form a cation selection region. The chain crosses the membrane as a helical span at residues 355–375 (GVAIGSSIQISMFAVPFCVVI). Topologically, residues 376–384 (GWMMGAQMD) are extracellular. A helical transmembrane segment spans residues 385–405 (LNFQLFETATLFITVIVVAFF). Residues 406–412 (LQEGTSN) are Cytoplasmic-facing. Residues 413–433 (YFKGLMLILCYLIVAASFFVH) form a helical membrane-spanning segment. Over 434-441 (EDPHQDDI) the chain is Extracellular.

The protein belongs to the Ca(2+):cation antiporter (CaCA) (TC 2.A.19) family. Cation/proton exchanger (CAX) subfamily.

The protein resides in the vacuole membrane. In terms of biological role, vacuolar cation/proton exchanger (CAX). Translocates Ca(2+) and other metal ions into vacuoles using the proton gradient formed by H(+)-ATPase and H(+)-pyrophosphatase. This Arabidopsis thaliana (Mouse-ear cress) protein is Vacuolar cation/proton exchanger 5 (CAX5).